The chain runs to 278 residues: Putative carbamate hydrolase RutD (278 aa).

The protein belongs to the AB hydrolase superfamily. Hydrolase RutD family.

It carries out the reaction carbamate + 2 H(+) = NH4(+) + CO2. Involved in pyrimidine catabolism. May facilitate the hydrolysis of carbamate, a reaction that can also occur spontaneously. The sequence is that of Putative carbamate hydrolase RutD from Yersinia enterocolitica serotype O:8 / biotype 1B (strain NCTC 13174 / 8081).